Consider the following 161-residue polypeptide: Ragulator complex protein LAMTOR1 (161 aa).

The segment at 1–43 is disordered; that stretch reads MGCCYSSENEDSDQDREERKLLLDPSSTPTKALNGAEPNYHSL. A lipid anchor (N-myristoyl glycine) is attached at G2. S-palmitoyl cysteine attachment occurs at residues C3 and C4. A Glycyl lysine isopeptide (Lys-Gly) (interchain with G-Cter in ubiquitin) cross-link involves residue K20. S27 carries the phosphoserine modification. Position 28 is a phosphothreonine (T28). K31 participates in a covalent cross-link: Glycyl lysine isopeptide (Lys-Gly) (interchain with G-Cter in ubiquitin). A phosphoserine mark is found at S42 and S56. K60 is covalently cross-linked (Glycyl lysine isopeptide (Lys-Gly) (interchain with G-Cter in ubiquitin)). Residue S98 is modified to Phosphoserine. Glycyl lysine isopeptide (Lys-Gly) (interchain with G-Cter in ubiquitin) cross-links involve residues K103 and K104. Residues 121-161 form an interaction with LAMTOR2 and LAMTOR3 region; sequence SEPIPFSDLQQVSRIAAYAYSALSQIRVDAKEELVVQFGIP. S141 is modified (phosphoserine).

This sequence belongs to the LAMTOR1 family. In terms of assembly, part of the Ragulator complex composed of LAMTOR1, LAMTOR2, LAMTOR3, LAMTOR4 and LAMTOR5. LAMTOR4 and LAMTOR5 form a heterodimer that interacts, through LAMTOR1, with a LAMTOR2, LAMTOR3 heterodimer. Interacts with LAMTOR2 and LAMTOR3; the interaction is direct. The Ragulator complex interacts with both the mTORC1 complex and heterodimers constituted of the Rag GTPases RagA/RRAGA, RagB/RRAGB, RagC/RRAGC and RagD/RRAGD; regulated by amino acid availability. The Ragulator complex interacts with SLC38A9; the probable amino acid sensor. Component of the lysosomal folliculin complex (LFC), composed of FLCN, FNIP1 (or FNIP2), RagA/RRAGA or RagB/RRAGB GDP-bound, RagC/RRAGC or RagD/RRAGD GTP-bound, and Ragulator. Associates with the lysosomal V-ATPase complex; interaction promotes the guanine nucleotide exchange factor (GEF) of the Ragulator complex. Interacts with MMP14. Interacts with CDKN1B; prevents the interaction of CDKN1B with RHOA leaving RHOA in a form accessible to activation by ARHGEF2. Interacts with PIP4P1. N-terminal myristoylation and palmitoylation mediates its recruitment to lysosome membranes, thereby promoting localization of the Ragulator complex to lysosomes. N-myristoylation by NMT1 is required for palmitoylation at Cys-3 and Cys-4. Post-translationally, ubiquitinated at Lys-60, Lys-103 and Lys-104 by UBE3A in neurons, promoting its degradation by the proteasome, thereby limiting mTORC1 signaling and activity-dependent synaptic remodeling. Ubiquitination at Lys-20 impairs the association with the lysosomal V-ATPase complex. Deubiquitination at Lys-20 by USP32 promotes the association with the lysosomal V-ATPase complex and subsequent activation of the mTORC1 complex.

The protein localises to the lysosome membrane. Its subcellular location is the late endosome membrane. In terms of biological role, key component of the Ragulator complex, a multiprotein complex involved in amino acid sensing and activation of mTORC1, a signaling complex promoting cell growth in response to growth factors, energy levels, and amino acids. Activated by amino acids through a mechanism involving the lysosomal V-ATPase, the Ragulator plays a dual role for the small GTPases Rag (RagA/RRAGA, RagB/RRAGB, RagC/RRAGC and/or RagD/RRAGD): it (1) acts as a guanine nucleotide exchange factor (GEF), activating the small GTPases Rag and (2) mediates recruitment of Rag GTPases to the lysosome membrane. Activated Ragulator and Rag GTPases function as a scaffold recruiting mTORC1 to lysosomes where it is in turn activated. LAMTOR1 is directly responsible for anchoring the Ragulator complex to the lysosomal membrane. LAMTOR1 wraps around the other subunits of the Ragulator complex to hold them in place and interacts with the Rag GTPases, thereby playing a key role in the recruitment of the mTORC1 complex to lysosomes. Also involved in the control of embryonic stem cells differentiation via non-canonical RagC/RRAGC and RagD/RRAGD activation: together with FLCN, it is necessary to recruit and activate RagC/RRAGC and RagD/RRAGD at the lysosomes, and to induce exit of embryonic stem cells from pluripotency via non-canonical, mTOR-independent TFE3 inactivation. Also required for late endosomes/lysosomes biogenesis it may regulate both the recycling of receptors through endosomes and the MAPK signaling pathway through recruitment of some of its components to late endosomes. May be involved in cholesterol homeostasis regulating LDL uptake and cholesterol release from late endosomes/lysosomes. May also play a role in RHOA activation. The chain is Ragulator complex protein LAMTOR1 from Mus musculus (Mouse).